Here is a 653-residue protein sequence, read N- to C-terminus: Sodium-dependent phosphate transporter 2 (653 aa).

A topological domain (extracellular) is located at residue methionine 1. A helical membrane pass occupies residues 2 to 22 (VLVEYLWMVIVGFIIAFILAF). At 23 to 46 (SVGANDVANSFGTAVGSGVVTLRQ) the chain is on the cytoplasmic side. Residues 47-67 (ACILASIFETTGSVLLGAKVG) traverse the membrane as a helical segment. At 68-86 (ETIRKGIIDVNLYNNTVDL) the chain is on the extracellular side. Asparagine 81 carries an N-linked (GlcNAc...) asparagine glycan. The helical transmembrane segment at 87–107 (LMAGEVSAMVGSAVWQLIASF) threads the bilayer. The Cytoplasmic portion of the chain corresponds to 108–109 (LR). Residues 110–130 (LPISGTHCIVGATIGFSLVAI) traverse the membrane as a helical segment. The Extracellular segment spans residues 131–142 (GTHGVQWMQLVK). The helical transmembrane segment at 143–163 (IVASWFISPLLSGLMSGALFL) threads the bilayer. Residues 164–187 (MIKFFILKKEDPVPNGLKALPVFY) are Cytoplasmic-facing. The helical transmembrane segment at 188–208 (AATIGINVFSILYTGAPLLGL) threads the bilayer. Residues 209 to 217 (ESFPVWATA) are Extracellular-facing. The chain crosses the membrane as a helical span at residues 218–238 (LLSIGIAIIFALIVWFFVCPW). Residues 239-483 (MKKKIASRLK…EDKEEKDKSE (245 aa)) lie on the Cytoplasmic side of the membrane. The chain crosses the membrane as a helical span at residues 484–504 (VHLLFHFLQILTACFGSFAHG). The Extracellular portion of the chain corresponds to 505–532 (GNDVSNAIGPLVALWLIYEQGGVMQEAS). Residues 533-553 (TPVWLLLYGGVGICAGLWVWG) traverse the membrane as a helical segment. The Cytoplasmic segment spans residues 554–572 (RRVIQTMGKDLTPITPSSG). The chain crosses the membrane as a helical span at residues 573-587 (FTIELASAFTVVVAS). At 588 to 594 (NIGLPIS) the chain is on the extracellular side. A helical transmembrane segment spans residues 595-610 (TTHCKVGSVVAVGWIR). At 611–622 (SRKAVDWRLFRN) the chain is on the cytoplasmic side. A helical transmembrane segment spans residues 623-643 (IFLAWFVTVPVAGLFSAGVMA). The Extracellular segment spans residues 644–653 (ILQYGILPYV).

It belongs to the inorganic phosphate transporter (PiT) (TC 2.A.20) family. As to quaternary structure, homodimer.

It localises to the cell membrane. The protein resides in the apical cell membrane. The catalysed reaction is 2 Na(+)(out) + phosphate(out) = 2 Na(+)(in) + phosphate(in). Its function is as follows. Sodium-phosphate symporter which preferentially transports the monovalent form of phosphate with a stoichiometry of two sodium ions per phosphate ion. In Xenopus tropicalis (Western clawed frog), this protein is Sodium-dependent phosphate transporter 2 (slc20a2).